The chain runs to 708 residues: Polyribonucleotide nucleotidyltransferase (708 aa).

Positions 485 and 491 each coordinate Mg(2+). Positions 552–611 constitute a KH domain; that stretch reads PKTYIMSIPPDKIRDVIGSGGKVINKIIAETGVKIDIKEDGKIFVMSEDSEGAKKALKII. The region spanning 621–689 is the S1 motif domain; it reads GEIYLGKVTK…NQGRINLSRK (69 aa). The disordered stretch occupies residues 689-708; it reads KDAIKDSEKKEQNEKDVQKK.

It belongs to the polyribonucleotide nucleotidyltransferase family. It depends on Mg(2+) as a cofactor.

It localises to the cytoplasm. The enzyme catalyses RNA(n+1) + phosphate = RNA(n) + a ribonucleoside 5'-diphosphate. Functionally, involved in mRNA degradation. Catalyzes the phosphorolysis of single-stranded polyribonucleotides processively in the 3'- to 5'-direction. This is Polyribonucleotide nucleotidyltransferase from Clostridium kluyveri (strain NBRC 12016).